A 239-amino-acid chain; its full sequence is UDP-2,3-diacylglucosamine hydrolase (239 aa).

5 residues coordinate Mn(2+): aspartate 8, histidine 10, aspartate 41, asparagine 78, and histidine 113. 78 to 79 is a substrate binding site; that stretch reads NR. Residues aspartate 121, serine 159, asparagine 163, lysine 166, and histidine 194 each contribute to the substrate site. Mn(2+) is bound by residues histidine 194 and histidine 196.

This sequence belongs to the LpxH family. Requires Mn(2+) as cofactor.

Its subcellular location is the cell inner membrane. It catalyses the reaction UDP-2-N,3-O-bis[(3R)-3-hydroxytetradecanoyl]-alpha-D-glucosamine + H2O = 2-N,3-O-bis[(3R)-3-hydroxytetradecanoyl]-alpha-D-glucosaminyl 1-phosphate + UMP + 2 H(+). It participates in glycolipid biosynthesis; lipid IV(A) biosynthesis; lipid IV(A) from (3R)-3-hydroxytetradecanoyl-[acyl-carrier-protein] and UDP-N-acetyl-alpha-D-glucosamine: step 4/6. In terms of biological role, hydrolyzes the pyrophosphate bond of UDP-2,3-diacylglucosamine to yield 2,3-diacylglucosamine 1-phosphate (lipid X) and UMP by catalyzing the attack of water at the alpha-P atom. Involved in the biosynthesis of lipid A, a phosphorylated glycolipid that anchors the lipopolysaccharide to the outer membrane of the cell. The chain is UDP-2,3-diacylglucosamine hydrolase from Shewanella sp. (strain ANA-3).